Consider the following 222-residue polypeptide: Putative N-acetylmannosamine-6-phosphate 2-epimerase (222 aa).

Belongs to the NanE family.

The enzyme catalyses an N-acyl-D-glucosamine 6-phosphate = an N-acyl-D-mannosamine 6-phosphate. The protein operates within amino-sugar metabolism; N-acetylneuraminate degradation; D-fructose 6-phosphate from N-acetylneuraminate: step 3/5. Converts N-acetylmannosamine-6-phosphate (ManNAc-6-P) to N-acetylglucosamine-6-phosphate (GlcNAc-6-P). The polypeptide is Putative N-acetylmannosamine-6-phosphate 2-epimerase (Staphylococcus aureus (strain USA300)).